Consider the following 131-residue polypeptide: Fluoride-specific ion channel FluC (131 aa).

A run of 3 helical transmembrane segments spans residues 3–23, 34–54, and 62–82; these read AAANLPAFLAVGAGAALGAWL, IFLTIPFGTLAANLLGGLLMG, and AVPAMSPVLKLLLTTGFLGGL. Residues Gly-80 and Thr-83 each coordinate Na(+). The helical transmembrane segment at 101–121 threads the bilayer; that stretch reads WGWLALHAAVHVAGSLLMAWI.

Belongs to the fluoride channel Fluc/FEX (TC 1.A.43) family.

The protein localises to the cell inner membrane. The catalysed reaction is fluoride(in) = fluoride(out). Na(+) is not transported, but it plays an essential structural role and its presence is essential for fluoride channel function. In terms of biological role, fluoride-specific ion channel. Important for reducing fluoride concentration in the cell, thus reducing its toxicity. The polypeptide is Fluoride-specific ion channel FluC (Aromatoleum aromaticum (strain DSM 19018 / LMG 30748 / EbN1) (Azoarcus sp. (strain EbN1))).